The following is a 1007-amino-acid chain: Lysosomal alpha-mannosidase (1007 aa).

A signal peptide spans 1-47; the sequence is MGASVLPLGLGAGDCQSSSGRRMSACLPRTALSFLLSLLLATPGARA. Disulfide bonds link Cys-53-Cys-356 and Cys-266-Cys-271. Zn(2+)-binding residues include His-70 and Asp-72. Asn-131 carries N-linked (GlcNAc...) asparagine glycosylation. Residue Asp-194 participates in Zn(2+) binding. Catalysis depends on Asp-194, which acts as the Nucleophile. Asn-308, Asn-343, and Asn-365 each carry an N-linked (GlcNAc...) asparagine glycan. Disulfide bonds link Cys-410–Cys-470 and Cys-491–Cys-499. His-444 is a binding site for Zn(2+). Residues Asn-495, Asn-540, Asn-639, Asn-686, Asn-760, and Asn-927 are each glycosylated (N-linked (GlcNAc...) asparagine).

This sequence belongs to the glycosyl hydrolase 38 family. It depends on Zn(2+) as a cofactor.

The protein localises to the lysosome. It carries out the reaction Hydrolysis of terminal, non-reducing alpha-D-mannose residues in alpha-D-mannosides.. Necessary for the catabolism of N-linked carbohydrates released during glycoprotein turnover. This Cavia porcellus (Guinea pig) protein is Lysosomal alpha-mannosidase (MAN2B1).